The primary structure comprises 82 residues: Defensin-like protein 75 (82 aa).

An N-terminal signal peptide occupies residues Met1 to Ala26. 4 disulfide bridges follow: Cys33–Cys66, Cys37–Cys55, Cys41–Cys64, and Cys45–Cys65.

It belongs to the DEFL family.

It is found in the secreted. The sequence is that of Defensin-like protein 75 (LCR45) from Arabidopsis thaliana (Mouse-ear cress).